Here is a 222-residue protein sequence, read N- to C-terminus: Dual specificity phosphatase 29 (222 aa).

Residues 54-202 form the Tyrosine-protein phosphatase domain; sequence HVNEVWPKLY…LRELDKQLVQ (149 aa). Residue 146-153 participates in substrate binding; sequence HCAMGRSR. Residue C147 is the Phosphocysteine intermediate of the active site. Residues 201–222 form a disordered region; the sequence is VQQRRGAQHRGEAGEKAGEKEP. Residues 209 to 222 are compositionally biased toward basic and acidic residues; it reads HRGEAGEKAGEKEP.

Belongs to the protein-tyrosine phosphatase family. Non-receptor class dual specificity subfamily. Homodimer. Interacts with PRKAA2.

The protein localises to the cytoplasm. It localises to the nucleus. It catalyses the reaction O-phospho-L-tyrosyl-[protein] + H2O = L-tyrosyl-[protein] + phosphate. The catalysed reaction is O-phospho-L-seryl-[protein] + H2O = L-seryl-[protein] + phosphate. The enzyme catalyses O-phospho-L-threonyl-[protein] + H2O = L-threonyl-[protein] + phosphate. Its function is as follows. Dual specificity phosphatase able to dephosphorylate phosphotyrosine, phosphoserine and phosphothreonine residues within the same substrate, with a preference for phosphotyrosine as a substrate. Involved in the modulation of intracellular signaling cascades. In skeletal muscle regulates systemic glucose homeostasis by activating, AMPK, an energy sensor protein kinase. Affects MAP kinase signaling though modulation of the MAPK1/2 cascade in skeletal muscle promoting muscle cell differentiation, development and atrophy. The sequence is that of Dual specificity phosphatase 29 (DUSP29) from Sus scrofa (Pig).